The chain runs to 416 residues: Glutamyl-tRNA reductase (416 aa).

Substrate is bound by residues 49 to 52 (TCNR), Ser105, 110 to 112 (EPQ), and Gln116. Catalysis depends on Cys50, which acts as the Nucleophile. NADP(+) is bound at residue 185–190 (GAGETI).

Belongs to the glutamyl-tRNA reductase family. Homodimer.

It carries out the reaction (S)-4-amino-5-oxopentanoate + tRNA(Glu) + NADP(+) = L-glutamyl-tRNA(Glu) + NADPH + H(+). It participates in porphyrin-containing compound metabolism; protoporphyrin-IX biosynthesis; 5-aminolevulinate from L-glutamyl-tRNA(Glu): step 1/2. In terms of biological role, catalyzes the NADPH-dependent reduction of glutamyl-tRNA(Glu) to glutamate 1-semialdehyde (GSA). This chain is Glutamyl-tRNA reductase, found in Shewanella pealeana (strain ATCC 700345 / ANG-SQ1).